The chain runs to 255 residues: Spectinomycin 9-adenylyltransferase (255 aa).

It carries out the reaction spectinomycin + ATP = 9-O-adenylylspectinomycin + diphosphate. In terms of biological role, mediates bacterial resistance to the antibiotic spectinomycin but not streptomycin. The protein is Spectinomycin 9-adenylyltransferase of Enterococcus faecalis (Streptococcus faecalis).